Here is a 127-residue protein sequence, read N- to C-terminus: UPF0102 protein Mmar10_3014 (127 aa).

This sequence belongs to the UPF0102 family.

The chain is UPF0102 protein Mmar10_3014 from Maricaulis maris (strain MCS10) (Caulobacter maris).